The primary structure comprises 901 residues: MASNIKEQAKKQFELNGQSYTYYDLQTLEEKGLAKISKLPYSIRVLLESVLRQEDDFVITDDHIKALSKFGNAGNEGEVPFKPSRVILQDFTGVPAVVDLASLRKAMNDVGGDINKINPEVPVDLVIDHSVQVDSYANPEALERNMKLEFERNYERYQFLNWATKAFDNYNAVPPATGIVHQVNLEYLANVVHVRDVDGEKTAFPDTLVGTDSHTTMINGIGVLGWGVGGIEAEAGMLGQPSYFPIPEVIGVRLTHSLPQGSTATDLALRVTEELRKKGVVGKFVEFFGPGVQHLPLADRATIANMAPEYGATCGFFPVDEESLKYMKLTGRDEEHIELVKEYLQQNHMFFDVEKEDPEYTDVIDLDLSTVEASLSGPKRPQDLIFLSDMKKEFEKSVTAPAGNQGHGLDQSEFDKKAEINFNDGSKATMKTGDIAIAAITSCTNTSNPYVMLGAGLVAKKAVEKGLKVPEFVKTSLAPGSKVVTGYLRDSGLQQYLDDLGFNLVGYGCTTCIGNSGPLLPEIEKAVADEDLLVTSVLSGNRNFEGRIHPLVKANYLASPQLVVAYALAGTVDIDLQNEPIGKGKDGKDVYLQDIWPSIQEVSDTVDKVVTPELFLEEYKNVYHNNEMWNEIDVTDEPLYDFDPNSTYIQNPTFFQGLSKEPGKIEPLKSLRVMGKFGDSVTTDHISPAGAIGKDTPAGKYLLDHDVAIRNFNSYGSRRGNHEVMVRGTFANIRIKNQLAPGTEGGFTTYWPTGEIMPIYDAAMKYKEDGTGLVVLAGNDYGMGSSRDWAAKGTNLLGVKTVIAQSYERIHRSNLVMMGVLPLQFQQGESAEALGLDGKEEISVDINEDVQPHDFVNVTAKKENGEIINFKAIVRFDSLVELDYYRHGGILQMVLRNKLAQ.

[4Fe-4S] cluster is bound by residues Cys443, Cys509, and Cys512.

It belongs to the aconitase/IPM isomerase family. As to quaternary structure, monomer. Requires [4Fe-4S] cluster as cofactor.

It catalyses the reaction citrate = D-threo-isocitrate. The catalysed reaction is (2S,3R)-3-hydroxybutane-1,2,3-tricarboxylate = 2-methyl-cis-aconitate + H2O. Its pathway is carbohydrate metabolism; tricarboxylic acid cycle; isocitrate from oxaloacetate: step 2/2. It participates in organic acid metabolism; propanoate degradation. In terms of biological role, involved in the catabolism of short chain fatty acids (SCFA) via the tricarboxylic acid (TCA)(acetyl degradation route) and probably the 2-methylcitrate cycle I (propionate degradation route). Catalyzes the reversible isomerization of citrate to isocitrate via cis-aconitate. Could catalyze the hydration of 2-methyl-cis-aconitate to yield (2R,3S)-2-methylisocitrate. The apo form of AcnA functions as a RNA-binding regulatory protein. This is Aconitate hydratase A (acnA) from Staphylococcus epidermidis (strain ATCC 35984 / DSM 28319 / BCRC 17069 / CCUG 31568 / BM 3577 / RP62A).